A 155-amino-acid chain; its full sequence is SsrA-binding protein (155 aa).

This sequence belongs to the SmpB family.

It is found in the cytoplasm. Required for rescue of stalled ribosomes mediated by trans-translation. Binds to transfer-messenger RNA (tmRNA), required for stable association of tmRNA with ribosomes. tmRNA and SmpB together mimic tRNA shape, replacing the anticodon stem-loop with SmpB. tmRNA is encoded by the ssrA gene; the 2 termini fold to resemble tRNA(Ala) and it encodes a 'tag peptide', a short internal open reading frame. During trans-translation Ala-aminoacylated tmRNA acts like a tRNA, entering the A-site of stalled ribosomes, displacing the stalled mRNA. The ribosome then switches to translate the ORF on the tmRNA; the nascent peptide is terminated with the 'tag peptide' encoded by the tmRNA and targeted for degradation. The ribosome is freed to recommence translation, which seems to be the essential function of trans-translation. This is SsrA-binding protein from Bacillus cytotoxicus (strain DSM 22905 / CIP 110041 / 391-98 / NVH 391-98).